We begin with the raw amino-acid sequence, 630 residues long: Auxin efflux carrier component 2 (630 aa).

Topologically, residues 1–6 are extracellular; that stretch reads MITGRD. A helical membrane pass occupies residues 7 to 27; it reads IYDVLAAIVPLYVAMFLAYGS. Over 28–38 the chain is Cytoplasmic; the sequence is VRWWGIFTPDQ. Residues 39–59 form a helical membrane-spanning segment; it reads CSGINRFVAVFAVPLLSFHFI. Val-51 is a (indol-3-yl)acetate binding site. Over 60–70 the chain is Extracellular; that stretch reads STNDPYSMNYR. The helical transmembrane segment at 71 to 91 threads the bilayer; it reads FLAADSLQKLVILAALAVWHN. The Cytoplasmic segment spans residues 92-108; sequence LLSRYRRNGGAAASLDW. Residues 109-129 form a helical membrane-spanning segment; sequence TITLFSLSTLPNTLVMGIPLL. 2 residues coordinate (indol-3-yl)acetate: Asn-120 and Leu-122. The Extracellular segment spans residues 130–139; sequence RAMYGDFSGS. The chain crosses the membrane as a helical span at residues 140 to 160; it reads LMVQIVVLQSVIWYTLMLFLF. A (indol-3-yl)acetate-binding site is contributed by Tyr-153. Residues 161–490 are Cytoplasmic-facing; it reads EYRGAKALIS…LIRNPNTYSS (330 aa). The interval 317–350 is disordered; it reads ASGKAADPPSYPAPNPGMMPAPRKKELGGSNSNS. Pro residues predominate over residues 325–335; sequence PSYPAPNPGMM. A helical membrane pass occupies residues 491-511; that stretch reads LIGLVWSLVSFRWNIQMPSII. At 512 to 514 the chain is on the extracellular side; sequence KGS. A helical transmembrane segment spans residues 515–535; that stretch reads ISILSDAGLGMAMFSLGLFMA. At 536 to 549 the chain is on the cytoplasmic side; sequence LQPKIISCGKTVAT. Residues 550–570 form a helical membrane-spanning segment; sequence FAMAVRFLTGPAVIAATSIAI. The Extracellular portion of the chain corresponds to 571-574; the sequence is GLRG. The chain crosses the membrane as a helical span at residues 575–595; the sequence is VLLHVAIVQAALPQGIVPFVF. Residues Ile-590 and Val-591 each contribute to the (indol-3-yl)acetate site. Residues 596 to 609 lie on the Cytoplasmic side of the membrane; it reads AKEYNCHPQILSTA. Residues 610–630 form a helical membrane-spanning segment; that stretch reads VIFGMLIALPITILYYVLLGI.

It belongs to the auxin efflux carrier (TC 2.A.69.1) family. Homodimer. Expressed in roots, leaves, shoot apex and panicles. Expressed in roots, stem bases and young panicles.

Its subcellular location is the membrane. In terms of biological role, acts as a component of the auxin efflux carrier. Involved in the basipetal polar auxin transport which contributes to the spreading growth of the tillers. The protein is Auxin efflux carrier component 2 of Oryza sativa subsp. japonica (Rice).